The sequence spans 194 residues: E3 ubiquitin-protein ligase RNF185 (194 aa).

The segment at 1–32 is disordered; sequence MASKGPTTSASTKSSSTGGTSGSSSSNGAGDN. Residues 31–82 form a required for ubiquitin ligase activity and protection against ER stress-induced cell death region; sequence DNTNQDNTFECNICLDTAKDAVISLCGHLFCWPCLHQWLETRPNRQVCPVCK. The segment at 41–82 adopts an RING-type zinc-finger fold; sequence CNICLDTAKDAVISLCGHLFCWPCLHQWLETRPNRQVCPVCK. Residues 92–125 are disordered; that stretch reads PLYGRGSTGQQDPREKTPPRPQGQRPEPENRGGF. 2 helical membrane-spanning segments follow: residues 133–153 and 174–194; these read GGFQ…ATAF and QFLS…LLIA.

Its subcellular location is the mitochondrion outer membrane. The protein resides in the endoplasmic reticulum membrane. It carries out the reaction S-ubiquitinyl-[E2 ubiquitin-conjugating enzyme]-L-cysteine + [acceptor protein]-L-lysine = [E2 ubiquitin-conjugating enzyme]-L-cysteine + N(6)-ubiquitinyl-[acceptor protein]-L-lysine.. Its pathway is protein modification; protein ubiquitination. Functionally, E3 ubiquitin-protein ligase that regulates selective mitochondrial autophagy by mediating 'Lys-63'-linked polyubiquitination. Acts in the endoplasmic reticulum (ER)-associated degradation (ERAD) pathway, which targets misfolded proteins that accumulate in the endoplasmic reticulum (ER) for ubiquitination and subsequent proteasome-mediated degradation. Protects cells from ER stress-induced apoptosis. Responsible for the cotranslational ubiquitination and degradation of CFTR in the ERAD pathway. Also acts as a regulator of the innate antiviral response by catalyzing 'Lys-27'-linked polyubiquitination of CGAS, thereby promoting CGAS cyclic GMP-AMP synthase activity. Preferentially associates with the E2 enzymes UBE2J1 and UBE2J2. The sequence is that of E3 ubiquitin-protein ligase RNF185 (RNF185) from Gallus gallus (Chicken).